The sequence spans 331 residues: uncharacterized protein (331 aa).

This sequence belongs to the proline racemase family.

This is an uncharacterized protein from Bacillus anthracis.